Here is a 932-residue protein sequence, read N- to C-terminus: Isoleucine--tRNA ligase (932 aa).

The short motif at P57 to H67 is the 'HIGH' region element. Residue E556 participates in L-isoleucyl-5'-AMP binding. Positions K597–S601 match the 'KMSKS' region motif. K600 provides a ligand contact to ATP. 4 residues coordinate Zn(2+): C891, C894, C911, and C914.

The protein belongs to the class-I aminoacyl-tRNA synthetase family. IleS type 1 subfamily. Monomer. Zn(2+) is required as a cofactor.

Its subcellular location is the cytoplasm. The enzyme catalyses tRNA(Ile) + L-isoleucine + ATP = L-isoleucyl-tRNA(Ile) + AMP + diphosphate. Functionally, catalyzes the attachment of isoleucine to tRNA(Ile). As IleRS can inadvertently accommodate and process structurally similar amino acids such as valine, to avoid such errors it has two additional distinct tRNA(Ile)-dependent editing activities. One activity is designated as 'pretransfer' editing and involves the hydrolysis of activated Val-AMP. The other activity is designated 'posttransfer' editing and involves deacylation of mischarged Val-tRNA(Ile). The polypeptide is Isoleucine--tRNA ligase (Lactiplantibacillus plantarum (strain ATCC BAA-793 / NCIMB 8826 / WCFS1) (Lactobacillus plantarum)).